The primary structure comprises 490 residues: Betaine aldehyde dehydrogenase (490 aa).

Residues threonine 26, isoleucine 27, and aspartate 93 each coordinate K(+). 150–152 (GAW) serves as a coordination point for NAD(+). Lysine 162 acts as the Charge relay system in catalysis. Residue 176–179 (KPSE) participates in NAD(+) binding. Valine 180 lines the K(+) pocket. 230-233 (GVAS) is a binding site for NAD(+). Leucine 246 provides a ligand contact to K(+). Glutamate 252 (proton acceptor) is an active-site residue. The NAD(+) site is built by glycine 254, cysteine 286, and glutamate 387. The active-site Nucleophile is the cysteine 286. A Cysteine sulfenic acid (-SOH) modification is found at cysteine 286. Lysine 457 and glycine 460 together coordinate K(+). The active-site Charge relay system is the glutamate 464.

It belongs to the aldehyde dehydrogenase family. Dimer of dimers. K(+) is required as a cofactor.

The enzyme catalyses betaine aldehyde + NAD(+) + H2O = glycine betaine + NADH + 2 H(+). Its pathway is amine and polyamine biosynthesis; betaine biosynthesis via choline pathway; betaine from betaine aldehyde: step 1/1. Functionally, involved in the biosynthesis of the osmoprotectant glycine betaine. Catalyzes the irreversible oxidation of betaine aldehyde to the corresponding acid. The protein is Betaine aldehyde dehydrogenase of Escherichia coli O6:H1 (strain CFT073 / ATCC 700928 / UPEC).